The chain runs to 736 residues: Catalase-peroxidase (736 aa).

The segment covering 1-10 (MDAKTDDKGA) has biased composition (basic and acidic residues). Positions 1–26 (MDAKTDDKGAGKCPFSGGSHGHRNRD) are disordered. Positions 96-218 (WHSAGTYRIT…LGAVQMGLIY (123 aa)) form a cross-link, tryptophyl-tyrosyl-methioninium (Trp-Tyr) (with M-244). Residue His-97 is the Proton acceptor of the active site. Positions 218–244 (YVNPEGPNGNPDPVAAAKDIRETFARM) form a cross-link, tryptophyl-tyrosyl-methioninium (Tyr-Met) (with W-96). Residue His-259 participates in heme b binding.

The protein belongs to the peroxidase family. Peroxidase/catalase subfamily. In terms of assembly, homodimer or homotetramer. Heme b serves as cofactor. Post-translationally, formation of the three residue Trp-Tyr-Met cross-link is important for the catalase, but not the peroxidase activity of the enzyme.

The catalysed reaction is H2O2 + AH2 = A + 2 H2O. It catalyses the reaction 2 H2O2 = O2 + 2 H2O. Functionally, bifunctional enzyme with both catalase and broad-spectrum peroxidase activity. The protein is Catalase-peroxidase of Rhodopseudomonas palustris (strain ATCC BAA-98 / CGA009).